A 713-amino-acid polypeptide reads, in one-letter code: Glycine--tRNA ligase beta subunit (713 aa).

This sequence belongs to the class-II aminoacyl-tRNA synthetase family. Tetramer of two alpha and two beta subunits.

The protein localises to the cytoplasm. It carries out the reaction tRNA(Gly) + glycine + ATP = glycyl-tRNA(Gly) + AMP + diphosphate. In Picosynechococcus sp. (strain ATCC 27264 / PCC 7002 / PR-6) (Agmenellum quadruplicatum), this protein is Glycine--tRNA ligase beta subunit.